The chain runs to 268 residues: Very-long-chain aldehyde decarbonylase GL1-8 (268 aa).

Helical transmembrane passes span 26–46 (IGTF…SLLF), 70–90 (CVVR…ILSY), 107–127 (WTVV…IFYW), and 164–184 (ILFL…HLFT). One can recognise a Fatty acid hydroxylase domain in the interval 114–249 (VLFFFVLEDF…FIYMDWLFGT (136 aa)).

It belongs to the sterol desaturase family. As to quaternary structure, homodimer.

The protein localises to the endoplasmic reticulum membrane. The enzyme catalyses a long-chain fatty aldehyde + 2 NADPH + O2 + H(+) = a long-chain alkane + formate + 2 NADP(+) + H2O. Its function is as follows. Aldehyde decarbonylase involved in the conversion of aldehydes to alkanes. Core component of a very-long-chain alkane synthesis complex. The polypeptide is Very-long-chain aldehyde decarbonylase GL1-8 (Oryza sativa subsp. indica (Rice)).